Here is an 88-residue protein sequence, read N- to C-terminus: Small ribosomal subunit protein uS15 (88 aa).

The protein belongs to the universal ribosomal protein uS15 family. Part of the 30S ribosomal subunit. Forms a bridge to the 50S subunit in the 70S ribosome, contacting the 23S rRNA.

Functionally, one of the primary rRNA binding proteins, it binds directly to 16S rRNA where it helps nucleate assembly of the platform of the 30S subunit by binding and bridging several RNA helices of the 16S rRNA. Its function is as follows. Forms an intersubunit bridge (bridge B4) with the 23S rRNA of the 50S subunit in the ribosome. This is Small ribosomal subunit protein uS15 from Mycoplasmopsis pulmonis (strain UAB CTIP) (Mycoplasma pulmonis).